Reading from the N-terminus, the 202-residue chain is Small ribosomal subunit protein uS4 (202 aa).

One can recognise an S4 RNA-binding domain in the interval 91–168 (SRLSSVLYNS…QKVPDYLEVD (78 aa)).

The protein belongs to the universal ribosomal protein uS4 family. In terms of assembly, part of the 30S ribosomal subunit. Contacts protein S5. The interaction surface between S4 and S5 is involved in control of translational fidelity.

One of the primary rRNA binding proteins, it binds directly to 16S rRNA where it nucleates assembly of the body of the 30S subunit. Its function is as follows. With S5 and S12 plays an important role in translational accuracy. The chain is Small ribosomal subunit protein uS4 from Ehrlichia chaffeensis (strain ATCC CRL-10679 / Arkansas).